Here is a 133-residue protein sequence, read N- to C-terminus: ATP synthase epsilon chain, chloroplastic (133 aa).

Belongs to the ATPase epsilon chain family. In terms of assembly, F-type ATPases have 2 components, CF(1) - the catalytic core - and CF(0) - the membrane proton channel. CF(1) has five subunits: alpha(3), beta(3), gamma(1), delta(1), epsilon(1). CF(0) has three main subunits: a, b and c.

It localises to the plastid. Its subcellular location is the chloroplast thylakoid membrane. Produces ATP from ADP in the presence of a proton gradient across the membrane. The protein is ATP synthase epsilon chain, chloroplastic of Solanum lycopersicum (Tomato).